A 201-amino-acid polypeptide reads, in one-letter code: Segregation and condensation protein B (201 aa).

Belongs to the ScpB family. In terms of assembly, homodimer. Homodimerization may be required to stabilize the binding of ScpA to the Smc head domains. Component of a cohesin-like complex composed of ScpA, ScpB and the Smc homodimer, in which ScpA and ScpB bind to the head domain of Smc. The presence of the three proteins is required for the association of the complex with DNA.

It localises to the cytoplasm. In terms of biological role, participates in chromosomal partition during cell division. May act via the formation of a condensin-like complex containing Smc and ScpA that pull DNA away from mid-cell into both cell halves. The chain is Segregation and condensation protein B from Enterococcus faecalis (strain ATCC 700802 / V583).